The primary structure comprises 942 residues: ATP-dependent RNA helicase DDX42 (942 aa).

Positions 1-18 are enriched in gly residues; the sequence is MNWNKGGPGTKRGFGFGG. Residues 1 to 114 are disordered; it reads MNWNKGGPGT…KPIDSDSDDD (114 aa). Lys5 bears the N6-acetyllysine mark. Arg12 carries the post-translational modification Omega-N-methylarginine. The segment covering 35 to 52 has biased composition (low complexity); that stretch reads SHSAFGATSSSSGFGKSA. Ser58 is modified (phosphoserine). Over residues 70-84 the composition is skewed to acidic residues; that stretch reads DEENAYFEDEEEDSS. Phosphoserine is present on residues Ser96, Ser104, Ser109, and Ser111. The stretch at 116–157 forms a coiled coil; that stretch reads LEAFMAEVEDQAARDMKRLEEKDKERKNVKGIRDDIEEEDDQ. A disordered region spans residues 182-203; sequence EYDSDGNPIAPTKKIIDPLPPI. Phosphoserine is present on Ser185. The Q motif motif lies at 253-281; sequence SSFAHFGFDEQLMHQIRKSEYTQPTPIQC. The Helicase ATP-binding domain maps to 284-459; that stretch reads VPVALSGRDM…RDILIDPIRV (176 aa). Position 297-304 (297-304) interacts with ATP; that stretch reads AKTGSGKT. Positions 407–410 match the DEAD box motif; sequence DEAD. One can recognise a Helicase C-terminal domain in the interval 487–632; sequence WLTRRLVEFT…HVSKELLDLA (146 aa). 2 stretches are compositionally biased toward polar residues: residues 737–760 and 786–798; these read LNSV…TSAT and GVNN…NSRE. Disordered stretches follow at residues 737-762 and 783-942; these read LNSV…ATKG and GAQG…RWDS. The tract at residues 738 to 833 is necessary for interaction with TP53BP2; that stretch reads NSVPTNSAQQ…TGNRHSDSPR (96 aa). Residue Ser754 is modified to Phosphoserine. The segment covering 820–924 has biased composition (basic and acidic residues); the sequence is SHGETGNRHS…KVDSKTDKTA (105 aa). A Glycyl lysine isopeptide (Lys-Gly) (interchain with G-Cter in SUMO2) cross-link involves residue Lys899.

It belongs to the DEAD box helicase family. DDX42 subfamily. In terms of assembly, transient component of the SF3B subcomplex of the 17S U2 SnRNP complex. Interacts (via the C-terminus) with TP53BP2; the interaction is not inhibitied by TP53BP2 ubiquitination and is independent of p53/TP53.

The protein resides in the cytoplasm. Its subcellular location is the nucleus. The enzyme catalyses ATP + H2O = ADP + phosphate + H(+). Its function is as follows. ATP-dependent RNA helicase that binds to partially double-stranded RNAs (dsRNAs) in order to unwind RNA secondary structures. Unwinding is promoted in the presence of single-strand binding proteins. Also mediates RNA duplex formation thereby displacing the single-strand RNA binding protein. ATP and ADP modulate its activity: ATP binding and hydrolysis by DDX42 triggers RNA strand separation, whereas the ADP-bound form of the protein triggers annealing of complementary RNA strands. Required for assembly of the 17S U2 SnRNP complex of the spliceosome, a large ribonucleoprotein complex that removes introns from transcribed pre-mRNAs: DDX42 associates transiently with the SF3B subcomplex of the 17S U2 SnRNP complex and is released after fulfilling its role in the assembly of 17S U2 SnRNP. Involved in the survival of cells by interacting with TP53BP2 and thereby counteracting the apoptosis-stimulating activity of TP53BP2. Relocalizes TP53BP2 to the cytoplasm. In Pongo abelii (Sumatran orangutan), this protein is ATP-dependent RNA helicase DDX42 (DDX42).